Reading from the N-terminus, the 222-residue chain is Thiamine-phosphate synthase (222 aa).

4-amino-2-methyl-5-(diphosphooxymethyl)pyrimidine-binding positions include 44–48 (QVRMK) and N75. Residues D76 and D95 each coordinate Mg(2+). Position 114 (T114) interacts with 4-amino-2-methyl-5-(diphosphooxymethyl)pyrimidine. 140–142 (SRS) serves as a coordination point for 2-[(2R,5Z)-2-carboxy-4-methylthiazol-5(2H)-ylidene]ethyl phosphate. A 4-amino-2-methyl-5-(diphosphooxymethyl)pyrimidine-binding site is contributed by K143. G171 contacts 2-[(2R,5Z)-2-carboxy-4-methylthiazol-5(2H)-ylidene]ethyl phosphate.

Belongs to the thiamine-phosphate synthase family. Requires Mg(2+) as cofactor.

It catalyses the reaction 2-[(2R,5Z)-2-carboxy-4-methylthiazol-5(2H)-ylidene]ethyl phosphate + 4-amino-2-methyl-5-(diphosphooxymethyl)pyrimidine + 2 H(+) = thiamine phosphate + CO2 + diphosphate. The enzyme catalyses 2-(2-carboxy-4-methylthiazol-5-yl)ethyl phosphate + 4-amino-2-methyl-5-(diphosphooxymethyl)pyrimidine + 2 H(+) = thiamine phosphate + CO2 + diphosphate. It carries out the reaction 4-methyl-5-(2-phosphooxyethyl)-thiazole + 4-amino-2-methyl-5-(diphosphooxymethyl)pyrimidine + H(+) = thiamine phosphate + diphosphate. It functions in the pathway cofactor biosynthesis; thiamine diphosphate biosynthesis; thiamine phosphate from 4-amino-2-methyl-5-diphosphomethylpyrimidine and 4-methyl-5-(2-phosphoethyl)-thiazole: step 1/1. Condenses 4-methyl-5-(beta-hydroxyethyl)thiazole monophosphate (THZ-P) and 2-methyl-4-amino-5-hydroxymethyl pyrimidine pyrophosphate (HMP-PP) to form thiamine monophosphate (TMP). The polypeptide is Thiamine-phosphate synthase (Anaeromyxobacter dehalogenans (strain 2CP-C)).